An 81-amino-acid polypeptide reads, in one-letter code: Large ribosomal subunit protein bL31B (81 aa).

Belongs to the bacterial ribosomal protein bL31 family. Type B subfamily. Part of the 50S ribosomal subunit.

The chain is Large ribosomal subunit protein bL31B from Lactococcus lactis subsp. lactis (strain IL1403) (Streptococcus lactis).